We begin with the raw amino-acid sequence, 243 residues long: Thaumatin-like protein 1 (243 aa).

The signal sequence occupies residues 1 to 22 (MMKTLALYGLTLALFFLSGAHS). Cystine bridges form between C31/C242, C79/C88, C93/C100, C148/C231, C153/C214, C161/C177, C181/C190, and C191/C201.

This sequence belongs to the thaumatin family.

The protein resides in the secreted. It is found in the extracellular space. It localises to the apoplast. Its function is as follows. Possesses antifungal activity. This chain is Thaumatin-like protein 1 (TL1), found in Castanea sativa (Sweet chestnut).